Reading from the N-terminus, the 229-residue chain is uncharacterized protein (229 aa).

The S4 RNA-binding domain maps to 2–69 (QRLAKIISNA…KPRLWIYYKP (68 aa)). The Nucleophile role is filled by D102.

Belongs to the pseudouridine synthase RsuA family.

The enzyme catalyses a uridine in RNA = a pseudouridine in RNA. This is an uncharacterized protein from Rickettsia felis (strain ATCC VR-1525 / URRWXCal2) (Rickettsia azadi).